Here is a 463-residue protein sequence, read N- to C-terminus: MGSKTPEEQIPGGNGGPPSTGPSSSGGEPRGTHLSRDGDGSLGDHGDDDDADEDDVSSRPLRADVEEKKKKKRPKKKKKPAAAKEQSSPPRVPLSDLFPLGEYPAGEDLVYDRVPQPDANTARTTTAELRYQSRKHLEDPALLNDYRKAAEVHRQVRHWVQEAVKPGWTLLDIATGIEDGVRSLLANQGIEPGDNLRSGMGFPTGLCLNHETAHYTPNPGQRDVVLQHGDVMKVDYGVQVNGWIVDSAFTMSFDPTYDNLLAAARDATNSGIKAAGIDVRICDVSAEIQEAMESYEVEIRGKTYPVKAVRNICAHDIKRYRIHGGKSIPFIRNNDQTKMEEGEIFAIETFGTTGRGKLYDDIGVYGYGLLHDAPAQVRLPFASANRLCKTIKEQFGSIVFCRRYLDRLGLDRYLAGLNCLVSHGVLESYAPLADIKGSYTSQFEHTILLRESSKEIVSRGSDY.

Residues 1–98 are disordered; that stretch reads MGSKTPEEQI…PPRVPLSDLF (98 aa). The segment covering 30-45 has biased composition (basic and acidic residues); sequence RGTHLSRDGDGSLGDH. Residues 46 to 55 are compositionally biased toward acidic residues; that stretch reads GDDDDADEDD. Positions 69–81 are enriched in basic residues; sequence KKKKRPKKKKKPA. Residue His-214 participates in substrate binding. Residues Asp-235, Asp-246, and His-315 each coordinate a divalent metal cation. Substrate is bound at residue His-323. A divalent metal cation-binding residues include Glu-348 and Glu-444.

The protein belongs to the peptidase M24A family. Methionine aminopeptidase eukaryotic type 2 subfamily. The cofactor is Co(2+). Requires Zn(2+) as cofactor. Mn(2+) serves as cofactor. It depends on Fe(2+) as a cofactor.

It is found in the cytoplasm. The enzyme catalyses Release of N-terminal amino acids, preferentially methionine, from peptides and arylamides.. Cotranslationally removes the N-terminal methionine from nascent proteins. The N-terminal methionine is often cleaved when the second residue in the primary sequence is small and uncharged (Met-Ala-, Cys, Gly, Pro, Ser, Thr, or Val). This Colletotrichum graminicola (strain M1.001 / M2 / FGSC 10212) (Maize anthracnose fungus) protein is Methionine aminopeptidase 2-1.